Reading from the N-terminus, the 443-residue chain is Thymidine phosphorylase (443 aa).

The protein belongs to the thymidine/pyrimidine-nucleoside phosphorylase family. In terms of assembly, homodimer.

It carries out the reaction thymidine + phosphate = 2-deoxy-alpha-D-ribose 1-phosphate + thymine. The protein operates within pyrimidine metabolism; dTMP biosynthesis via salvage pathway; dTMP from thymine: step 1/2. In terms of biological role, the enzymes which catalyze the reversible phosphorolysis of pyrimidine nucleosides are involved in the degradation of these compounds and in their utilization as carbon and energy sources, or in the rescue of pyrimidine bases for nucleotide synthesis. This chain is Thymidine phosphorylase, found in Shewanella baltica (strain OS185).